Here is a 93-residue protein sequence, read N- to C-terminus: Putative septation protein SpoVG (93 aa).

It belongs to the SpoVG family.

Its function is as follows. Could be involved in septation. The polypeptide is Putative septation protein SpoVG (Alkaliphilus oremlandii (strain OhILAs) (Clostridium oremlandii (strain OhILAs))).